A 621-amino-acid chain; its full sequence is uncharacterized protein (621 aa).

The protein belongs to the chlamydial CPn_0512/CT_425/TC_0708 family.

This is an uncharacterized protein from Chlamydia muridarum (strain MoPn / Nigg).